A 301-amino-acid polypeptide reads, in one-letter code: Acetaldehyde dehydrogenase (301 aa).

The active-site Acyl-thioester intermediate is Cys130. NAD(+) contacts are provided by residues 161-169 and Asn272; that span reads SVGPGTRRN.

This sequence belongs to the acetaldehyde dehydrogenase family.

The catalysed reaction is acetaldehyde + NAD(+) + CoA = acetyl-CoA + NADH + H(+). The polypeptide is Acetaldehyde dehydrogenase (mhpF) (Cupriavidus taiwanensis (strain DSM 17343 / BCRC 17206 / CCUG 44338 / CIP 107171 / LMG 19424 / R1) (Ralstonia taiwanensis (strain LMG 19424))).